The primary structure comprises 372 residues: Cobalt-precorrin-5B C(1)-methyltransferase (372 aa).

It belongs to the CbiD family.

The enzyme catalyses Co-precorrin-5B + S-adenosyl-L-methionine = Co-precorrin-6A + S-adenosyl-L-homocysteine. It functions in the pathway cofactor biosynthesis; adenosylcobalamin biosynthesis; cob(II)yrinate a,c-diamide from sirohydrochlorin (anaerobic route): step 6/10. Its function is as follows. Catalyzes the methylation of C-1 in cobalt-precorrin-5B to form cobalt-precorrin-6A. This Prochlorococcus marinus subsp. pastoris (strain CCMP1986 / NIES-2087 / MED4) protein is Cobalt-precorrin-5B C(1)-methyltransferase.